Here is a 340-residue protein sequence, read N- to C-terminus: Acidic endochitinase WIN6 (340 aa).

Positions 1–22 are cleaved as a signal peptide; that stretch reads MSVWALFAFFSLFLSLSVRGSA. Positions 23–63 constitute a Chitin-binding type-1 domain; the sequence is EQCGRQAGDALCPGGLCCSSYGWCGTTVDYCGIGCQSQCDG. Cystine bridges form between C25–C40, C34–C46, C39–C53, and C57–C61. Positions 64–85 are spacer; that stretch reads GGGGDGGDDGCDGGDDGGGDGD. Positions 86 to 340 are chitinase; sequence DGYLSDIIPK…YGLSGLKDTM (255 aa). 3 disulfides stabilise this stretch: C110–C172, C183–C191, and C290–C323. Residue E154 is the Proton donor of the active site.

It belongs to the glycosyl hydrolase 19 family. Chitinase class I subfamily.

The catalysed reaction is Random endo-hydrolysis of N-acetyl-beta-D-glucosaminide (1-&gt;4)-beta-linkages in chitin and chitodextrins.. In terms of biological role, defense against chitin-containing fungal pathogens. This is Acidic endochitinase WIN6 (WIN6) from Populus trichocarpa (Western balsam poplar).